Consider the following 313-residue polypeptide: Putative S-adenosyl-L-methionine-dependent methyltransferase MAP_4064c (313 aa).

S-adenosyl-L-methionine contacts are provided by residues Asp129 and Asp158–Leu159.

It belongs to the UPF0677 family.

Functionally, exhibits S-adenosyl-L-methionine-dependent methyltransferase activity. The polypeptide is Putative S-adenosyl-L-methionine-dependent methyltransferase MAP_4064c (Mycolicibacterium paratuberculosis (strain ATCC BAA-968 / K-10) (Mycobacterium paratuberculosis)).